Consider the following 552-residue polypeptide: Probable ABC transporter ATP-binding/permease protein HI_0664 (552 aa).

Helical transmembrane passes span 22-42 (IMAFTITMGTLGFLAAIFIMV), 52-72 (LNFDTHLSFSGILTALIVLAV), 139-159 (IAPIMIAFFTSAILLLVFAQL), 162-182 (WFVLVALAAYLTVGVILPIIT), 253-273 (EVAVSVFNIIMLFTGLILFSL), and 278-298 (FAAFLIGVILLMSSYGPVIAL). Residues 23–307 (MAFTITMGTL…LSNLSSNLLQ (285 aa)) form the ABC transmembrane type-1 domain. An ABC transporter domain is found at 340-552 (IDVENVNFAY…VIGIENGRMS (213 aa)). Residue 372–379 (GRSGSGKS) coordinates ATP.

The protein belongs to the ABC transporter superfamily. Lipid exporter (TC 3.A.1.106) family.

The protein localises to the cell inner membrane. The chain is Probable ABC transporter ATP-binding/permease protein HI_0664 from Haemophilus influenzae (strain ATCC 51907 / DSM 11121 / KW20 / Rd).